We begin with the raw amino-acid sequence, 188 residues long: Threonylcarbamoyl-AMP synthase (188 aa).

One can recognise a YrdC-like domain in the interval 3 to 188 (QLHPSDIKDI…RSGKILRNGQ (186 aa)).

The protein belongs to the SUA5 family. TsaC subfamily.

The protein localises to the cytoplasm. The catalysed reaction is L-threonine + hydrogencarbonate + ATP = L-threonylcarbamoyladenylate + diphosphate + H2O. Required for the formation of a threonylcarbamoyl group on adenosine at position 37 (t(6)A37) in tRNAs that read codons beginning with adenine. Catalyzes the conversion of L-threonine, HCO(3)(-)/CO(2) and ATP to give threonylcarbamoyl-AMP (TC-AMP) as the acyladenylate intermediate, with the release of diphosphate. This is Threonylcarbamoyl-AMP synthase from Shewanella baltica (strain OS155 / ATCC BAA-1091).